A 301-amino-acid chain; its full sequence is 3-methyl-2-oxobutanoate hydroxymethyltransferase (301 aa).

Residues 1 to 28 show a composition bias toward low complexity; it reads MATSNSSDSSMSAEVPAPYGNGPANAPA. Residues 1–37 form a disordered region; the sequence is MATSNSSDSSMSAEVPAPYGNGPANAPATPSDTAKKP. D82 and D121 together coordinate Mg(2+). Residues 82–83, D121, and K151 contribute to the 3-methyl-2-oxobutanoate site; that span reads DS. Position 153 (E153) interacts with Mg(2+). Residue E219 is the Proton acceptor of the active site.

It belongs to the PanB family. Homodecamer; pentamer of dimers. Requires Mg(2+) as cofactor.

It localises to the cytoplasm. It catalyses the reaction 3-methyl-2-oxobutanoate + (6R)-5,10-methylene-5,6,7,8-tetrahydrofolate + H2O = 2-dehydropantoate + (6S)-5,6,7,8-tetrahydrofolate. It functions in the pathway cofactor biosynthesis; (R)-pantothenate biosynthesis; (R)-pantoate from 3-methyl-2-oxobutanoate: step 1/2. In terms of biological role, catalyzes the reversible reaction in which hydroxymethyl group from 5,10-methylenetetrahydrofolate is transferred onto alpha-ketoisovalerate to form ketopantoate. The sequence is that of 3-methyl-2-oxobutanoate hydroxymethyltransferase from Arthrobacter sp. (strain FB24).